A 120-amino-acid polypeptide reads, in one-letter code: Large ribosomal subunit protein uL18 (120 aa).

This sequence belongs to the universal ribosomal protein uL18 family. In terms of assembly, part of the 50S ribosomal subunit; part of the 5S rRNA/L5/L18/L25 subcomplex. Contacts the 5S and 23S rRNAs.

In terms of biological role, this is one of the proteins that bind and probably mediate the attachment of the 5S RNA into the large ribosomal subunit, where it forms part of the central protuberance. In Afipia carboxidovorans (strain ATCC 49405 / DSM 1227 / KCTC 32145 / OM5) (Oligotropha carboxidovorans), this protein is Large ribosomal subunit protein uL18.